Reading from the N-terminus, the 1828-residue chain is Chromodomain-helicase-DNA-binding protein 2 (1828 aa).

Over residues 1 to 14 (MMRNKDKSQEEDSS) the composition is skewed to basic and acidic residues. The interval 1–243 (MMRNKDKSQE…EDDDFETDSD (243 aa)) is disordered. The segment covering 15–75 (LHSNASSHSA…SESESAGSKS (61 aa)) has biased composition (low complexity). Composition is skewed to basic and acidic residues over residues 81–101 (EAKE…KMWE), 115–128 (SRQE…KEEA), and 146–155 (KKQEKWKQEP). Residues 175-204 (VKARRPVPRRTVPKPRVKKQPKTQRGKRKK) are compositionally biased toward basic residues. 2 positions are modified to phosphoserine: Ser-207 and Ser-208. Over residues 234–243 (EDDDFETDSD) the composition is skewed to acidic residues. Phosphothreonine is present on Thr-240. Ser-242 is modified (phosphoserine). Chromo domains follow at residues 261–353 (ETIE…QWLG) and 378–456 (QIVE…IPTR). One can recognise a Helicase ATP-binding domain in the interval 496–666 (AHSWCKNNSV…WSLLHFIMPE (171 aa)). Position 509–516 (509–516 (DEMGLGKT)) interacts with ATP. The short motif at 617–620 (DEAH) is the DEAH box element. Residues 795 to 946 (LLDKLLTRLR…HLVIQRMDTT (152 aa)) enclose the Helicase C-terminal domain. Disordered stretches follow at residues 1030–1124 (EDEE…RSVR), 1331–1462 (VTGG…DEDD), 1556–1638 (HKKR…ADRG), and 1680–1828 (HMDA…VRKT). Positions 1037–1065 (ERPHKDWDEIIPEEQRKKVEEEERQKELE) are enriched in basic and acidic residues. A phosphoserine mark is found at Ser-1085, Ser-1087, Ser-1365, and Ser-1386. The span at 1347–1371 (KKENKVPRLKEEHGIELSSPRHSDN) shows a compositional bias: basic and acidic residues. Composition is skewed to basic and acidic residues over residues 1396 to 1431 (ENKE…KSGD) and 1565 to 1574 (EQKKKDDVTG). The interval 1464–1566 (LDQETFSICK…KKRSQEEEEQ (103 aa)) is CHD1 helical C-terminal domain (CHCT). Residues 1584-1601 (SGSSRDSLISQSHTSHNL) are compositionally biased toward polar residues. Basic and acidic residues-rich tracts occupy residues 1698–1720 (RPYD…DRHH), 1739–1749 (QDFRRMSDHRP), 1760–1772 (DHYR…KLGE), and 1795–1814 (SPHD…RSLE). A Phosphoserine modification is found at Ser-1807.

It belongs to the SNF2/RAD54 helicase family. Interacts with MYOD1. Interacts with histone H3.3.

It localises to the nucleus. It catalyses the reaction ATP + H2O = ADP + phosphate + H(+). ATP-dependent chromatin-remodeling factor that specifically binds to the promoter of target genes, leading to chromatin remodeling, possibly by promoting deposition of histone H3.3. Involved in myogenesis via interaction with MYOD1: binds to myogenic gene regulatory sequences and mediates incorporation of histone H3.3 prior to the onset of myogenic gene expression, promoting their expression. This is Chromodomain-helicase-DNA-binding protein 2 (CHD2) from Homo sapiens (Human).